Consider the following 643-residue polypeptide: Manganese lipoxygenase (643 aa).

Residues 166 to 643 (WYTDEVFAQQ…PEQLANAIVI (478 aa)) enclose the Lipoxygenase domain. Mn(2+) is bound by residues His-325, His-330, His-510, Asn-514, and Ile-643.

It belongs to the lipoxygenase family. Mn(2+) serves as cofactor.

The enzyme catalyses (9Z,12Z)-octadecadienoate + O2 = (13S)-hydroperoxy-(9Z,11E)-octadecadienoate. Functionally, lipoxygenase that metabolizes linoleic and alpha-linolenic acids to 13S-hydroperoxy fatty acids. The sequence is that of Manganese lipoxygenase from Pleurotus sapidus (Oyster mushroom).